The chain runs to 125 residues: Small ribosomal subunit protein bS16 (125 aa).

Residues 87–125 (EGKKKQALARQSASKKAVKEKTEESKGSEVDSETSTSAD) form a disordered region. Positions 103–115 (AVKEKTEESKGSE) are enriched in basic and acidic residues.

It belongs to the bacterial ribosomal protein bS16 family.

The sequence is that of Small ribosomal subunit protein bS16 from Prochlorococcus marinus (strain MIT 9211).